The chain runs to 313 residues: WD repeat-containing protein 82 (313 aa).

WD repeat units lie at residues 19–58 (ENSD…PKRT), 105–144 (GHSK…CQGL), 146–184 (HLQG…KGPF), 192–231 (DRTC…VMHT), 236–276 (NNSK…KVAV), and 280–313 (KHTG…TIDD).

It belongs to the WD repeat SWD2 family. Component of the SET1/COMPASS complex. Component of the PNUTS-PP1 phosphatase complex.

The protein resides in the nucleus. Its subcellular location is the chromosome. The protein localises to the cytoplasm. Regulatory component of the SET1/COMPASS complex implicated in the tethering of this complex to transcriptional start sites of active genes. Facilitates histone H3 'Lys-4' methylation (H3K4me) via recruitment of the SETD1A or SETD1B to the 'Ser-5' phosphorylated C-terminal domain (CTD) of RNA polymerase II large subunit (POLR2A). Component of the PNUTS-PP1 protein phosphatase complex, a protein phosphatase 1 (PP1) complex that promotes RNA polymerase II transcription pause-release, allowing transcription elongation. The protein is WD repeat-containing protein 82 (wdr82) of Xenopus tropicalis (Western clawed frog).